Here is a 530-residue protein sequence, read N- to C-terminus: Autoinducer-2 kinase (530 aa).

Belongs to the FGGY kinase family.

It is found in the cytoplasm. It carries out the reaction (S)-4,5-dihydroxypentane-2,3-dione + ATP = (2S)-2-hydroxy-3,4-dioxopentyl phosphate + ADP + H(+). Catalyzes the phosphorylation of autoinducer-2 (AI-2) to phospho-AI-2, which subsequently inactivates the transcriptional regulator LsrR and leads to the transcription of the lsr operon. Phosphorylates the ring-open form of (S)-4,5-dihydroxypentane-2,3-dione (DPD), which is the precursor to all AI-2 signaling molecules, at the C5 position. This Photorhabdus laumondii subsp. laumondii (strain DSM 15139 / CIP 105565 / TT01) (Photorhabdus luminescens subsp. laumondii) protein is Autoinducer-2 kinase.